The primary structure comprises 310 residues: Vomeronasal type-1 receptor 3 (310 aa).

Topologically, residues 1–5 (MASKD) are extracellular. The chain crosses the membrane as a helical span at residues 6 to 26 (FAIGMILSQIMVGFLGNFFLL). The Cytoplasmic segment spans residues 27-50 (YHYSFLHFTRGMLQSTDLTLKHLT). Residues 51–71 (IANSLVILSKGIPQTMAAFGL) form a helical membrane-spanning segment. The Extracellular segment spans residues 72–91 (KDSLSDIGCKFVFYVHRVGR). The chain crosses the membrane as a helical span at residues 92–112 (AVCTGNACLLSVFQVITISSS). At 113 to 129 (EFRWAELKLHAHKYIRS) the chain is on the cytoplasmic side. The chain crosses the membrane as a helical span at residues 130–150 (FILVLCWILNTLVNITVPLHV). The Extracellular portion of the chain corresponds to 151-186 (TGKWNSINSTKTNDYGYCSGGSRSRIPHSLHIVLLS). A glycan (N-linked (GlcNAc...) asparagine) is linked at Asn158. Residues 187-207 (SLDVLCLGLMTLASGSMVFIL) form a helical membrane-spanning segment. Residues 208 to 235 (HRLKQQVQHIHGTNLSPRSSPESRVTQS) are Cytoplasmic-facing. The chain crosses the membrane as a helical span at residues 236-258 (ILVLVSTLCYFTRSPPSLHMSLF). Residues 259-263 (PNPSW) lie on the Extracellular side of the membrane. Residues 264–284 (WPLNASALITACFPTVSPFVL) form a helical membrane-spanning segment. Over 285-310 (MSRHPRIPRLGSACCGRNPQFPKLVR) the chain is Cytoplasmic.

Belongs to the G-protein coupled receptor 1 family.

The protein resides in the cell membrane. In terms of biological role, putative pheromone receptor. This is Vomeronasal type-1 receptor 3 (VN1R3) from Pan troglodytes (Chimpanzee).